Consider the following 184-residue polypeptide: Glutathione-regulated potassium-efflux system ancillary protein KefG (184 aa).

It belongs to the NAD(P)H dehydrogenase (quinone) family. KefG subfamily. In terms of assembly, interacts with KefB.

The protein resides in the cell inner membrane. It catalyses the reaction a quinone + NADH + H(+) = a quinol + NAD(+). The enzyme catalyses a quinone + NADPH + H(+) = a quinol + NADP(+). Its function is as follows. Regulatory subunit of a potassium efflux system that confers protection against electrophiles. Required for full activity of KefB. The sequence is that of Glutathione-regulated potassium-efflux system ancillary protein KefG from Yersinia enterocolitica serotype O:8 / biotype 1B (strain NCTC 13174 / 8081).